A 78-amino-acid chain; its full sequence is Large ribosomal subunit protein bL28 (78 aa).

Residues 1 to 27 (MSAYCQVTGRKPSFGKSVSHSHRRTNR) form a disordered region.

The protein belongs to the bacterial ribosomal protein bL28 family.

The chain is Large ribosomal subunit protein bL28 from Corynebacterium kroppenstedtii (strain DSM 44385 / JCM 11950 / CIP 105744 / CCUG 35717).